The following is a 186-amino-acid chain: Ribosome-recycling factor (186 aa).

Basic and acidic residues-rich tracts occupy residues 134-169 and 176-186; these read RDAN…KKAE and AKAREAEVMED. Positions 134–186 are disordered; sequence RDANKAAETAEKDKEMTEDDRDKTKDQVQELTKKAETNVNESAKAREAEVMED.

This sequence belongs to the RRF family.

The protein resides in the cytoplasm. Functionally, responsible for the release of ribosomes from messenger RNA at the termination of protein biosynthesis. May increase the efficiency of translation by recycling ribosomes from one round of translation to another. This chain is Ribosome-recycling factor, found in Rhodopirellula baltica (strain DSM 10527 / NCIMB 13988 / SH1).